The primary structure comprises 213 residues: Pyridoxine/pyridoxamine 5'-phosphate oxidase (213 aa).

Substrate-binding positions include 9–12 (RLEY) and Lys-67. Residues 62–67 (RIVLLK), 77–78 (YT), Arg-83, Lys-84, and Gln-106 contribute to the FMN site. Tyr-124, Arg-128, and Ser-132 together coordinate substrate. FMN-binding positions include 141–142 (QS) and Trp-185. 191–193 (RLH) serves as a coordination point for substrate. An FMN-binding site is contributed by Arg-195.

The protein belongs to the pyridoxamine 5'-phosphate oxidase family. As to quaternary structure, homodimer. FMN is required as a cofactor.

The enzyme catalyses pyridoxamine 5'-phosphate + O2 + H2O = pyridoxal 5'-phosphate + H2O2 + NH4(+). It catalyses the reaction pyridoxine 5'-phosphate + O2 = pyridoxal 5'-phosphate + H2O2. Its pathway is cofactor metabolism; pyridoxal 5'-phosphate salvage; pyridoxal 5'-phosphate from pyridoxamine 5'-phosphate: step 1/1. It participates in cofactor metabolism; pyridoxal 5'-phosphate salvage; pyridoxal 5'-phosphate from pyridoxine 5'-phosphate: step 1/1. Its function is as follows. Catalyzes the oxidation of either pyridoxine 5'-phosphate (PNP) or pyridoxamine 5'-phosphate (PMP) into pyridoxal 5'-phosphate (PLP). This chain is Pyridoxine/pyridoxamine 5'-phosphate oxidase, found in Chromobacterium violaceum (strain ATCC 12472 / DSM 30191 / JCM 1249 / CCUG 213 / NBRC 12614 / NCIMB 9131 / NCTC 9757 / MK).